The sequence spans 132 residues: MVMTDPIADFLTRIRNANQANHSVVEAPASNIKRGIAEILKCEGFVKDVEVIEDDKQGIIRIFLKYGQNGERVITGLKRISKPGLRVYTKREDVPKVLNGLGIAIISTSEGLLTDREARQKNIGGEVITYVW.

It belongs to the universal ribosomal protein uS8 family. As to quaternary structure, part of the 30S ribosomal subunit. Contacts proteins S5 and S12.

One of the primary rRNA binding proteins, it binds directly to 16S rRNA central domain where it helps coordinate assembly of the platform of the 30S subunit. This is Small ribosomal subunit protein uS8 from Streptococcus mutans serotype c (strain ATCC 700610 / UA159).